Here is a 218-residue protein sequence, read N- to C-terminus: Probable transaldolase (218 aa).

Lys-87 serves as the catalytic Schiff-base intermediate with substrate.

Belongs to the transaldolase family. Type 3B subfamily.

The protein resides in the cytoplasm. The enzyme catalyses D-sedoheptulose 7-phosphate + D-glyceraldehyde 3-phosphate = D-erythrose 4-phosphate + beta-D-fructose 6-phosphate. The protein operates within carbohydrate degradation; pentose phosphate pathway; D-glyceraldehyde 3-phosphate and beta-D-fructose 6-phosphate from D-ribose 5-phosphate and D-xylulose 5-phosphate (non-oxidative stage): step 2/3. In terms of biological role, transaldolase is important for the balance of metabolites in the pentose-phosphate pathway. This Parabacteroides distasonis (strain ATCC 8503 / DSM 20701 / CIP 104284 / JCM 5825 / NCTC 11152) protein is Probable transaldolase.